Here is a 772-residue protein sequence, read N- to C-terminus: Angiomotin-like protein 2 (772 aa).

Disordered regions lie at residues glycine 41–serine 158, arginine 170–phenylalanine 239, and glutamine 260–glutamine 299. Composition is skewed to basic and acidic residues over residues glutamine 80–leucine 91, lysine 100–alanine 112, and arginine 142–histidine 153. Residues glycine 101 to glycine 303 are required for interaction with CDH5. At tyrosine 107 the chain carries Phosphotyrosine; by FGFR1. Polar residues predominate over residues histidine 178 to serine 191. Pro residues predominate over residues proline 197–tyrosine 214. The interval glutamine 221 to glycine 303 is required for interaction with CDH1. A coiled-coil region spans residues alanine 305 to glutamine 578. Residues lysine 343 and lysine 404 each participate in a glycyl lysine isopeptide (Lys-Gly) (interchain with G-Cter in ubiquitin) cross-link. 2 disordered regions span residues isoleucine 596–glycine 615 and glycine 680–serine 752. Residues arginine 686–alanine 699 show a composition bias toward basic and acidic residues. Positions aspartate 718–cysteine 733 are enriched in polar residues. Phosphoserine occurs at positions 752 and 755. A PDZ-binding motif is present at residues glutamate 769–isoleucine 772.

This sequence belongs to the angiomotin family. In terms of assembly, part of a complex composed of AMOTL2, MAGI1 and CDH5, within the complex AMOTL2 acts as a scaffold protein for the interaction of MAGI1 with CDH5. The complex is required for coupling actin fibers to cell junctions in endothelial cells. Within the complex AMOTL2 (via its N-terminus) interacts with CDH5. Interacts (via N-terminus) with MAGI1. Interacts (via N-terminus) with ACTB; the interaction facilitates binding of cell junction complexes to actin fibers in endothelial cells. Interacts with CDH1; the interaction may facilitate binding of radial actin fibers to cell junction complexes. Interacts with SRC. Interacts with YAP1; the interaction is required for ubiquitination of AMOTL2 and localization of YAP1 to tight junctions. Interacts with WWP1; the interaction facilitates WWP1 interaction with the Crumbs complex and subsequent WWP1 translocation to the plasma membrane. WWP1 interaction with the Crumbs complex promotes WWP1 monoubiquitination of AMOTL2 which subsequently activates the Hippo signaling pathway. When ubiquitinated interacts with LATS2 (via UBA domain); the interaction promotes LATS2 phosphorylation of YAP1. Interacts (via PPXY motif) with WWTR1/TAZ (via WW domain); the interaction promotes WWTR1/TAZ localization to the cytoplasm and thereby inhibition of its transcriptional properties. Interacts with PHLDB2; interaction may facilitate PHLDB2 localization to the myotube podosome cortex that surrounds the core. Post-translationally, phosphorylation at Tyr-107 is necessary for efficient binding to SRC and synergistically functioning with SRC to activate the downstream MAPK pathway. In terms of processing, monoubiquitinated at Lys-343 and Lys-404 by Crumbs complex-bound WWP1. De-ubiquitinated at Lys-343 and Lys-404 by USP9X; the interaction may be promoted by cell contact inhibition. Deubiquitination of AMOTL2 negatively regulates Hippo signaling activation. Expressed in skeletal muscle at neuromuscular junctions (at protein level).

It is found in the recycling endosome. The protein localises to the cytoplasm. Its subcellular location is the cell projection. It localises to the podosome. The protein resides in the cell junction. Regulates the translocation of phosphorylated SRC to peripheral cell-matrix adhesion sites. Required for proper architecture of actin filaments. Plays a role in coupling actin fibers to cell junctions in endothelial cells and is therefore required for correct endothelial cell morphology via facilitating transcellular transmission of mechanical force resulting in endothelial cell elongation. Required for the anchoring of radial actin fibers to CDH1 junction complexes at the cell membrane which facilitates organization of radial actin fiber structure and cellular response to contractile forces. This contributes to maintenance of cell area, size, shape, epithelial sheet organization and trophectoderm cell properties that facilitate blastocyst zona hatching. Inhibits the Wnt/beta-catenin signaling pathway, probably by recruiting CTNNB1 to recycling endosomes and hence preventing its translocation to the nucleus. Participates in angiogenesis. Activates the Hippo signaling pathway in response to cell contact inhibition via interaction with and ubiquitination by Crumbs complex-bound WWP1. Ubiquitinated AMOTL2 then interacts with LATS2 which in turn phosphorylates YAP1, excluding it from the nucleus and localizing it to the cytoplasm and tight junctions, therefore ultimately repressing YAP1-driven transcription of target genes. Acts to inhibit WWTR1/TAZ transcriptional coactivator activity via sequestering WWTR1/TAZ in the cytoplasm and at tight junctions. Regulates the size and protein composition of the podosome cortex and core at myofibril neuromuscular junctions. Selectively promotes FGF-induced MAPK activation through SRC. May play a role in the polarity, proliferation and migration of endothelial cells. This Mus musculus (Mouse) protein is Angiomotin-like protein 2.